The chain runs to 84 residues: Sulfur carrier protein TusA (84 aa).

Catalysis depends on C19, which acts as the Cysteine persulfide intermediate.

Belongs to the sulfur carrier protein TusA family. As to quaternary structure, interacts with IscS.

The protein resides in the cytoplasm. Its pathway is tRNA modification. Its function is as follows. Sulfur carrier protein involved in sulfur trafficking in the cell. Part of a sulfur-relay system required for 2-thiolation during synthesis of 2-thiouridine of the modified wobble base 5-methylaminomethyl-2-thiouridine (mnm(5)s(2)U) in tRNA. Interacts with IscS and stimulates its cysteine desulfurase activity. Accepts an activated sulfur from IscS, which is then transferred to TusD, and thus determines the direction of sulfur flow from IscS to 2-thiouridine formation. Also appears to be involved in sulfur transfer for the biosynthesis of molybdopterin. The chain is Sulfur carrier protein TusA from Yersinia pseudotuberculosis serotype O:1b (strain IP 31758).